Reading from the N-terminus, the 419-residue chain is UDP-N-acetylglucosamine 1-carboxyvinyltransferase (419 aa).

22-23 (KN) lines the phosphoenolpyruvate pocket. Residue R91 participates in UDP-N-acetyl-alpha-D-glucosamine binding. C115 functions as the Proton donor in the catalytic mechanism. The residue at position 115 (C115) is a 2-(S-cysteinyl)pyruvic acid O-phosphothioketal. Residues 120-124 (RPVDL), 160-163 (KVSV), D305, and V327 contribute to the UDP-N-acetyl-alpha-D-glucosamine site.

It belongs to the EPSP synthase family. MurA subfamily.

It localises to the cytoplasm. The catalysed reaction is phosphoenolpyruvate + UDP-N-acetyl-alpha-D-glucosamine = UDP-N-acetyl-3-O-(1-carboxyvinyl)-alpha-D-glucosamine + phosphate. The protein operates within cell wall biogenesis; peptidoglycan biosynthesis. Its function is as follows. Cell wall formation. Adds enolpyruvyl to UDP-N-acetylglucosamine. In Shigella boydii serotype 18 (strain CDC 3083-94 / BS512), this protein is UDP-N-acetylglucosamine 1-carboxyvinyltransferase.